Reading from the N-terminus, the 137-residue chain is UPF0275 protein PM0489 (137 aa).

Belongs to the UPF0275 family.

The chain is UPF0275 protein PM0489 from Pasteurella multocida (strain Pm70).